A 360-amino-acid chain; its full sequence is Peptide chain release factor 1 (360 aa).

The residue at position 237 (Gln237) is an N5-methylglutamine.

The protein belongs to the prokaryotic/mitochondrial release factor family. Post-translationally, methylated by PrmC. Methylation increases the termination efficiency of RF1.

It localises to the cytoplasm. Peptide chain release factor 1 directs the termination of translation in response to the peptide chain termination codons UAG and UAA. The sequence is that of Peptide chain release factor 1 from Pseudomonas putida (strain W619).